The primary structure comprises 142 residues: Large ribosomal subunit protein uL11 (142 aa).

The protein belongs to the universal ribosomal protein uL11 family. In terms of assembly, part of the ribosomal stalk of the 50S ribosomal subunit. Interacts with L10 and the large rRNA to form the base of the stalk. L10 forms an elongated spine to which L12 dimers bind in a sequential fashion forming a multimeric L10(L12)X complex. Post-translationally, one or more lysine residues are methylated.

Forms part of the ribosomal stalk which helps the ribosome interact with GTP-bound translation factors. This is Large ribosomal subunit protein uL11 from Mycobacteroides abscessus (strain ATCC 19977 / DSM 44196 / CCUG 20993 / CIP 104536 / JCM 13569 / NCTC 13031 / TMC 1543 / L948) (Mycobacterium abscessus).